The chain runs to 791 residues: Protein FAM47A (791 aa).

3 disordered regions span residues 195-257 (PVSH…TRRR), 274-409 (EDAR…TGVC), and 449-573 (VKKT…SEPP). 2 stretches are compositionally biased toward basic and acidic residues: residues 274–288 (EDAR…KTTD) and 333–342 (GESHLRLEHS). Polar residues predominate over residues 349–358 (SLRSEPSETG). Residues 449 to 462 (VKKTKEPTEPHKSP) are compositionally biased toward basic and acidic residues.

This sequence belongs to the FAM47 family.

This chain is Protein FAM47A (FAM47A), found in Homo sapiens (Human).